Reading from the N-terminus, the 351-residue chain is C(7)-cyclitol 7-kinase (351 aa).

It belongs to the ROK (NagC/XylR) family.

It catalyses the reaction valienone + ATP = valienone 7-phosphate + ADP + H(+). The catalysed reaction is validone + ATP = validone 7-phosphate + ADP + H(+). Its function is as follows. Involved in the biosynthesis of the antifungal agent validamycin A. Catalyzes the phosphorylation of valienone and validone to their 7-phosphate derivatives. This chain is C(7)-cyclitol 7-kinase, found in Streptomyces hygroscopicus subsp. limoneus.